The primary structure comprises 278 residues: Potassium/proton antiporter CemA (278 aa).

4 helical membrane passes run 61–81 (ILLL…FVFG), 155–175 (AVKN…LMIT), 203–223 (IILF…EVII), and 238–258 (FIFL…KYWI).

The protein belongs to the CemA family.

The protein resides in the plastid. The protein localises to the chloroplast inner membrane. The catalysed reaction is K(+)(in) + H(+)(out) = K(+)(out) + H(+)(in). In terms of biological role, contributes to K(+)/H(+) antiport activity by supporting proton efflux to control proton extrusion and homeostasis in chloroplasts in a light-dependent manner to modulate photosynthesis. Prevents excessive induction of non-photochemical quenching (NPQ) under continuous-light conditions. Indirectly promotes efficient inorganic carbon uptake into chloroplasts. This is Potassium/proton antiporter CemA from Pyropia yezoensis (Susabi-nori).